Here is an 831-residue protein sequence, read N- to C-terminus: Vi polysaccharide biosynthesis protein TviD (831 aa).

Its pathway is glycan metabolism; Vi-antigen biosynthesis. It functions in the pathway capsule biogenesis; capsule polysaccharide biosynthesis. Functionally, may be required for maturation of the Vi polysaccharide. This Salmonella typhi protein is Vi polysaccharide biosynthesis protein TviD (tviD).